The sequence spans 344 residues: MGGWRVLGQASGGWRRGLGIRATSTAAGFGTKARHQLQRRGASKPSDPPGDQPFPGLLRPGTFSREELVDVLRAAVVDSKGPLVTLNKPQGLPVTGKPGELTLLSVLPELSRSLGLGEQEVQVVRASGKEASGLVLLSSCSQTASRLQKFFTHSRRARKPTATYCAVTDGIPVTSEGKIQAALKLEHIDGVNLVVPVQSPSRKDIMEGVKRTLSHFRVVATGSGCALVQLQPLTVFPSQLQAHMALQLCPVLGDHTYSARVGTVLGQRFLLPVESTKPQRQVLDEALLGRLCLTASQAARLPLHLHLHCLRLPGARPRDPPIELLAPLPSYFSRTLQCLGLHYQ.

The transit peptide at 1–41 directs the protein to the mitochondrion; the sequence is MGGWRVLGQASGGWRRGLGIRATSTAAGFGTKARHQLQRRG. The segment at 29–59 is disordered; that stretch reads FGTKARHQLQRRGASKPSDPPGDQPFPGLLR. Over residues 32–42 the composition is skewed to basic residues; the sequence is KARHQLQRRGA. Ser64 carries the phosphoserine modification.

This sequence belongs to the pseudouridine synthase RluA family. As to quaternary structure, forms a regulatory protein-RNA complex, consisting of RCC1L, NGRN, RPUSD3, RPUSD4, TRUB2, FASTKD2 and 16S mt-rRNA.

The protein localises to the mitochondrion matrix. It catalyses the reaction a uridine in mRNA = a pseudouridine in mRNA. Catalyzes uridine to pseudouridine isomerization (pseudouridylation) of specific mitochondrial mRNAs (mt-mRNAs), a post-transcriptional modification necessary for their translation. Acts at position 390 in COXI mt-mRNA and at position 697-699 in mitochondrial COXIII mt-mRNA. As a component of a functional protein-RNA module, consisting of RCC1L, NGRN, RPUSD3, RPUSD4, TRUB2, FASTKD2 and 16S mitochondrial ribosomal RNA (16S mt-rRNA), controls 16S mt-rRNA abundance and may play a role in mitochondrial ribosome biogenesis. This Bos taurus (Bovine) protein is Mitochondrial mRNA pseudouridine synthase RPUSD3 (RPUSD3).